A 751-amino-acid polypeptide reads, in one-letter code: Ecdysteroid-phosphate phosphatase (751 aa).

The region spanning 16-60 is the UBA domain; the sequence is CISKQHLTPLQTLLQMGFPRHRAEKALASTGNRGVQIASDWLLAH. Residues 271-336 enclose the SH3 domain; the sequence is ATKQVQKVVY…PVNYTERTAE (66 aa). 2 disordered regions span residues 367–394 and 458–484; these read GRSI…FEES and EPPA…PGSL. Positions 466-479 are enriched in basic and acidic residues; that stretch reads RPDDTLSVHSDHSL. The interval 490–751 is phosphatase-like; it reads KNRKIYIMRH…RFEWNALSAT (262 aa). The active site involves R498. H499 serves as the catalytic Tele-phosphohistidine intermediate. H681 is an active-site residue.

Its subcellular location is the cytoplasm. It localises to the cytosol. The protein resides in the nucleus. It catalyses the reaction ecdysone 22-phosphate + H2O = ecdysone + phosphate. The enzyme catalyses 20-hydroxyecdysone 22-phosphate + H2O = 20-hydroxyecdysone + phosphate. It carries out the reaction 2-deoxyecdysone 22-phosphate + H2O = 2-deoxyecdysone + phosphate. Functionally, steroid phosphatase that dephosphorylates ecdysteroids such as ecdysone 22-phosphate (E22P), 3-epi-ecdysone 22-phosphate (E22P) and 3-epi-ecdysone 2-phosphate (E2P). Likely catalyzes the conversion of inactive phosphorylated ecdysteroids into their active forms. Shows high activity towards ecdysone 22-phosphate (E22P), but is also significantly active against 3-epi-ecdysone 22-phosphate (E22P) and 3-epi-ecdysone 2-phosphate (E2P). Also displays acid phosphatase activity towards 4-nitrophenyl phosphate (pNNP) in vitro. Has no activity towards 3-epi-ecdysone 3-phosphate (E3P). The chain is Ecdysteroid-phosphate phosphatase from Drosophila melanogaster (Fruit fly).